Consider the following 258-residue polypeptide: Tegument protein VP22 (258 aa).

Positions 66-143 (VQPAARGRDR…RAPPGANAVA (78 aa)) are disordered. The segment covering 77 to 118 (AAAGTTVAAPAAAPARRSSSRASSRPPRAAADPPVLRPATRG) has biased composition (low complexity). Positions 131-134 (PRPR) match the Nuclear localization signal motif. The Nuclear export signal motif lies at 204-216 (LDRMLKSAAIRIL). Residues 234–258 (RAQRPAARGSTSGGESRLRGERARP) form a disordered region. Residues 249 to 258 (SRLRGERARP) are compositionally biased toward basic and acidic residues.

Belongs to the alphaherpesvirinae VP22 tegument protein family. As to quaternary structure, interacts with gE (via C-terminus); this interaction is necessary for the recruitment of VP22 to the Golgi and its packaging into virions. Interacts with gM (via C-terminus). Interacts with VP16; this interaction allows the formation of a tripartite complex composed of VP16, VP22 and UL41/VHS. Interacts with the capsid-binding protein UL16. Interacts with host CGAS. Post-translationally, highly phosphorylated in the host cell. Packaging is selective for underphosphorylated forms.

The protein localises to the virion tegument. The protein resides in the host cytoplasm. Its subcellular location is the host nucleus. It is found in the host Golgi apparatus. Functionally, tegument protein that plays different roles during the time course of infection. Participates in both the accumulation of viral mRNAs and viral protein translation at late time of infection. Modulates the RNase activity of the virion host shutoff protein UL41 probably to ensure necessary levels of key cellular mRNAs and proteins. Plays a role in microtubule reorganization that occurs after viral infection by stabilizing microtubule network. Plays a role in the inhibition of host innate immune system by targeting the CGAS enzymatic activity which is the principal cytosolic DNA sensor that detects invading viral DNA. Acts by mediating disruption of liquid-like droplets in which CGAS is activated, thereby preventing CGAS activity. The protein is Tegument protein VP22 of Bovine herpesvirus 1.1 (strain Cooper) (BoHV-1).